A 440-amino-acid chain; its full sequence is MSTPTPKVGFVSLGCPKALVDSERILTQLRMEGYEVVPTYEDADVVVVNTCGFIDSAKAESLEVIGEAIAENGKVIVTGCMGVEEHAIRDVHPSVLAVTGPQQYEQVVTAVHEVVPPKTEHNPLVDLVPPQGVKLTPRHYAYLKISEGCNHSCSFCIIPSMRGKLVSRPVGDVLSEAERLVKAGVKELLVISQDTSAYGVDLKYKTDFWNGQPVKTRMKELCEALSSMGVWVRLHYVYPYPNVDDVIPLMAAGKLLPYLDIPFQHASPKVLKAMKRPAFEDKTLARIKQWREICPELTIRSTFIVGFPGETEEDFQYLLDWLTEAQLDRVGCFQYSPVEGAPANELGLEPVPDEVKQDRWERFMAHQQAISAARLQLKVGKEIEVLIDEVDEQGAVGRSWADAPEIDGNVFVDSDELKPGDKVRVRITDADEYDLWAELV.

The region spanning 6–116 (PKVGFVSLGC…VVTAVHEVVP (111 aa)) is the MTTase N-terminal domain. Cys-15, Cys-51, Cys-80, Cys-149, Cys-153, and Cys-156 together coordinate [4Fe-4S] cluster. The Radical SAM core domain maps to 135–373 (LTPRHYAYLK…MAHQQAISAA (239 aa)). The TRAM domain occupies 376 to 440 (QLKVGKEIEV…DEYDLWAELV (65 aa)).

The protein belongs to the methylthiotransferase family. RimO subfamily. The cofactor is [4Fe-4S] cluster.

Its subcellular location is the cytoplasm. It catalyses the reaction L-aspartate(89)-[ribosomal protein uS12]-hydrogen + (sulfur carrier)-SH + AH2 + 2 S-adenosyl-L-methionine = 3-methylsulfanyl-L-aspartate(89)-[ribosomal protein uS12]-hydrogen + (sulfur carrier)-H + 5'-deoxyadenosine + L-methionine + A + S-adenosyl-L-homocysteine + 2 H(+). Catalyzes the methylthiolation of an aspartic acid residue of ribosomal protein uS12. In Pseudomonas aeruginosa (strain ATCC 15692 / DSM 22644 / CIP 104116 / JCM 14847 / LMG 12228 / 1C / PRS 101 / PAO1), this protein is Ribosomal protein uS12 methylthiotransferase RimO.